We begin with the raw amino-acid sequence, 157 residues long: GTP-dependent dephospho-CoA kinase (157 aa).

5 residues coordinate GTP: D40, D59, K61, E107, and D128.

It belongs to the GTP-dependent DPCK family.

The enzyme catalyses 3'-dephospho-CoA + GTP = GDP + CoA + H(+). The protein operates within cofactor biosynthesis; coenzyme A biosynthesis. Its function is as follows. Catalyzes the GTP-dependent phosphorylation of the 3'-hydroxyl group of dephosphocoenzyme A to form coenzyme A (CoA). The protein is GTP-dependent dephospho-CoA kinase of Desulfurococcus amylolyticus (strain DSM 18924 / JCM 16383 / VKM B-2413 / 1221n) (Desulfurococcus kamchatkensis).